A 272-amino-acid chain; its full sequence is Endogenous Bornavirus-like nucleoprotein 2 (272 aa).

The segment at 48 to 70 is disordered; the sequence is MSHLRKDSQPSSPGDDAMDRSGL.

Its function is as follows. May act as an RNA-binding protein. The C-terminal region is highly homologous to the bornavirus nucleocapsid N protein that binds viral RNA and oligomerizes. The viral protein also possesses a nuclear import and a nuclear export signal. These 2 signals seem absent in EBLN-2 supporting an unrelated function in Human. This chain is Endogenous Bornavirus-like nucleoprotein 2 (EBLN2), found in Homo sapiens (Human).